Here is a 363-residue protein sequence, read N- to C-terminus: Protein RecA (363 aa).

78–85 (GPESGGKT) contributes to the ATP binding site.

The protein belongs to the RecA family.

The protein localises to the cytoplasm. In terms of biological role, can catalyze the hydrolysis of ATP in the presence of single-stranded DNA, the ATP-dependent uptake of single-stranded DNA by duplex DNA, and the ATP-dependent hybridization of homologous single-stranded DNAs. It interacts with LexA causing its activation and leading to its autocatalytic cleavage. Probably involved in base excision repair. Following severe irradiation (7 kGy of gamma irradiation) genomic DNA is fragmented. DNA is progressively degraded for the first 1.5 hours after IR, in a step promoted by RecA and counterbalanced by DNA Pol I and Pol III, followed by massive DNA synthesis and genome reassembly in the next hour. Optimal priming of DNA synthesis requires both RecA and RadA, Pol III initiates DNA synthesis while both Pol I and Pol III are required for its continuation. In the absence of RecA the majority of the chromosome is still reconstituted, via either single-strand annealing or non-homologous end joining. This is Protein RecA from Deinococcus radiodurans (strain ATCC 13939 / DSM 20539 / JCM 16871 / CCUG 27074 / LMG 4051 / NBRC 15346 / NCIMB 9279 / VKM B-1422 / R1).